The sequence spans 337 residues: Dihydroorotate dehydrogenase (quinone) (337 aa).

FMN-binding positions include 62–66 (AGLDK) and Thr86. Lys66 serves as a coordination point for substrate. 111 to 115 (NRFGF) is a substrate binding site. FMN-binding residues include Asn139 and Asn172. Residue Asn172 coordinates substrate. Residue Ser175 is the Nucleophile of the active site. Residue Asn177 participates in substrate binding. FMN contacts are provided by Lys217 and Thr245. 246–247 (NT) is a substrate binding site. FMN-binding positions include Gly268, Gly297, and 318 to 319 (YS).

It belongs to the dihydroorotate dehydrogenase family. Type 2 subfamily. As to quaternary structure, monomer. FMN is required as a cofactor.

It is found in the cell membrane. The catalysed reaction is (S)-dihydroorotate + a quinone = orotate + a quinol. Its pathway is pyrimidine metabolism; UMP biosynthesis via de novo pathway; orotate from (S)-dihydroorotate (quinone route): step 1/1. Its function is as follows. Catalyzes the conversion of dihydroorotate to orotate with quinone as electron acceptor. This is Dihydroorotate dehydrogenase (quinone) from Methylobacillus flagellatus (strain ATCC 51484 / DSM 6875 / VKM B-1610 / KT).